Reading from the N-terminus, the 286-residue chain is Bifunctional protein FolD (286 aa).

NADP(+) is bound by residues 166 to 168 (GAS) and isoleucine 232.

The protein belongs to the tetrahydrofolate dehydrogenase/cyclohydrolase family. Homodimer.

It carries out the reaction (6R)-5,10-methylene-5,6,7,8-tetrahydrofolate + NADP(+) = (6R)-5,10-methenyltetrahydrofolate + NADPH. The enzyme catalyses (6R)-5,10-methenyltetrahydrofolate + H2O = (6R)-10-formyltetrahydrofolate + H(+). Its pathway is one-carbon metabolism; tetrahydrofolate interconversion. Catalyzes the oxidation of 5,10-methylenetetrahydrofolate to 5,10-methenyltetrahydrofolate and then the hydrolysis of 5,10-methenyltetrahydrofolate to 10-formyltetrahydrofolate. This chain is Bifunctional protein FolD, found in Shewanella denitrificans (strain OS217 / ATCC BAA-1090 / DSM 15013).